Reading from the N-terminus, the 874-residue chain is S-layer protein (874 aa).

The first 30 residues, 1–30, serve as a signal peptide directing secretion; the sequence is MAKTNSYKKVIAGTMTAAMVAGVVSPVAAA. 3 SLH domains span residues 31 to 93, 94 to 151, and 152 to 214; these read GKSF…NAQP, SFKD…KVDG, and TLVT…ENSD.

It is found in the secreted. The protein localises to the cell wall. Its subcellular location is the S-layer. In terms of biological role, the S-layer is a paracrystalline mono-layered assembly of proteins which coat the surface of bacteria. This Bacillus licheniformis protein is S-layer protein.